Consider the following 113-residue polypeptide: Large ribosomal subunit protein uL22 (113 aa).

It belongs to the universal ribosomal protein uL22 family. In terms of assembly, part of the 50S ribosomal subunit.

In terms of biological role, this protein binds specifically to 23S rRNA; its binding is stimulated by other ribosomal proteins, e.g. L4, L17, and L20. It is important during the early stages of 50S assembly. It makes multiple contacts with different domains of the 23S rRNA in the assembled 50S subunit and ribosome. Its function is as follows. The globular domain of the protein is located near the polypeptide exit tunnel on the outside of the subunit, while an extended beta-hairpin is found that lines the wall of the exit tunnel in the center of the 70S ribosome. This chain is Large ribosomal subunit protein uL22, found in Xylella fastidiosa (strain M12).